A 124-amino-acid chain; its full sequence is Putative membrane protein insertion efficiency factor (124 aa).

The segment at 1 to 24 (MHDPHGHAHTVRPPGRGRNWPGPW) is disordered. A compositionally biased stretch (low complexity) spans 12 to 24 (RPPGRGRNWPGPW).

Belongs to the UPF0161 family.

It localises to the cell inner membrane. Its function is as follows. Could be involved in insertion of integral membrane proteins into the membrane. This Mesorhizobium japonicum (strain LMG 29417 / CECT 9101 / MAFF 303099) (Mesorhizobium loti (strain MAFF 303099)) protein is Putative membrane protein insertion efficiency factor.